Consider the following 248-residue polypeptide: Phosphoribosylformylglycinamidine synthase subunit PurQ (248 aa).

One can recognise a Glutamine amidotransferase type-1 domain in the interval 6 to 248; the sequence is AMVLRMEGTN…IFFRILYNST (243 aa). C95 acts as the Nucleophile in catalysis. Residues H215 and E217 contribute to the active site.

As to quaternary structure, part of the FGAM synthase complex composed of 1 PurL, 1 PurQ and 2 PurS subunits.

The protein resides in the cytoplasm. The enzyme catalyses N(2)-formyl-N(1)-(5-phospho-beta-D-ribosyl)glycinamide + L-glutamine + ATP + H2O = 2-formamido-N(1)-(5-O-phospho-beta-D-ribosyl)acetamidine + L-glutamate + ADP + phosphate + H(+). It carries out the reaction L-glutamine + H2O = L-glutamate + NH4(+). The protein operates within purine metabolism; IMP biosynthesis via de novo pathway; 5-amino-1-(5-phospho-D-ribosyl)imidazole from N(2)-formyl-N(1)-(5-phospho-D-ribosyl)glycinamide: step 1/2. Its function is as follows. Part of the phosphoribosylformylglycinamidine synthase complex involved in the purines biosynthetic pathway. Catalyzes the ATP-dependent conversion of formylglycinamide ribonucleotide (FGAR) and glutamine to yield formylglycinamidine ribonucleotide (FGAM) and glutamate. The FGAM synthase complex is composed of three subunits. PurQ produces an ammonia molecule by converting glutamine to glutamate. PurL transfers the ammonia molecule to FGAR to form FGAM in an ATP-dependent manner. PurS interacts with PurQ and PurL and is thought to assist in the transfer of the ammonia molecule from PurQ to PurL. The sequence is that of Phosphoribosylformylglycinamidine synthase subunit PurQ from Picrophilus torridus (strain ATCC 700027 / DSM 9790 / JCM 10055 / NBRC 100828 / KAW 2/3).